We begin with the raw amino-acid sequence, 521 residues long: DNA damage-binding protein cmr1 (521 aa).

Positions 36–75 (DKIIPKPAPPKPKRASTPRVKREPVKKEAARPTRQSSRLA) are disordered. Over residues 55–66 (VKREPVKKEAAR) the composition is skewed to basic and acidic residues. 5 WD repeats span residues 183 to 224 (IVPQ…PKIE), 242 to 282 (THSR…STEI), 333 to 373 (LTDH…GKGD), 382 to 422 (EHES…EWKA), and 490 to 521 (DGIT…CLWM).

Belongs to the WD repeat DDB2/WDR76 family.

DNA-binding protein that binds to both single- and double-stranded DNA. Binds preferentially to UV-damaged DNA. May be involved in DNA-metabolic processes. The sequence is that of DNA damage-binding protein cmr1 from Neurospora crassa (strain ATCC 24698 / 74-OR23-1A / CBS 708.71 / DSM 1257 / FGSC 987).